The chain runs to 96 residues: Co-chaperonin GroES (96 aa).

It belongs to the GroES chaperonin family. Heptamer of 7 subunits arranged in a ring. Interacts with the chaperonin GroEL.

The protein localises to the cytoplasm. Functionally, together with the chaperonin GroEL, plays an essential role in assisting protein folding. The GroEL-GroES system forms a nano-cage that allows encapsulation of the non-native substrate proteins and provides a physical environment optimized to promote and accelerate protein folding. GroES binds to the apical surface of the GroEL ring, thereby capping the opening of the GroEL channel. The sequence is that of Co-chaperonin GroES from Legionella jeonii.